A 292-amino-acid chain; its full sequence is Hypersensitive-induced response protein 4 (292 aa).

Gly-2 carries N-myristoyl glycine lipidation.

Self-interacts and forms heteromers. Interacts with NB-LRR class of R proteins before R proteins (e.g. RPS2 or RPM1) are activated by the effectors.

It localises to the cell membrane. The sequence is that of Hypersensitive-induced response protein 4 (HIR4) from Arabidopsis thaliana (Mouse-ear cress).